Here is a 491-residue protein sequence, read N- to C-terminus: Glutamyl-tRNA(Gln) amidotransferase subunit A (491 aa).

Catalysis depends on charge relay system residues Lys80 and Ser155. Catalysis depends on Ser179, which acts as the Acyl-ester intermediate.

The protein belongs to the amidase family. GatA subfamily. As to quaternary structure, heterotrimer of A, B and C subunits.

The catalysed reaction is L-glutamyl-tRNA(Gln) + L-glutamine + ATP + H2O = L-glutaminyl-tRNA(Gln) + L-glutamate + ADP + phosphate + H(+). Its function is as follows. Allows the formation of correctly charged Gln-tRNA(Gln) through the transamidation of misacylated Glu-tRNA(Gln) in organisms which lack glutaminyl-tRNA synthetase. The reaction takes place in the presence of glutamine and ATP through an activated gamma-phospho-Glu-tRNA(Gln). This is Glutamyl-tRNA(Gln) amidotransferase subunit A from Salinispora tropica (strain ATCC BAA-916 / DSM 44818 / JCM 13857 / NBRC 105044 / CNB-440).